A 467-amino-acid chain; its full sequence is Asparagine--tRNA ligase (467 aa).

Belongs to the class-II aminoacyl-tRNA synthetase family. As to quaternary structure, homodimer.

Its subcellular location is the cytoplasm. The enzyme catalyses tRNA(Asn) + L-asparagine + ATP = L-asparaginyl-tRNA(Asn) + AMP + diphosphate + H(+). In Haemophilus ducreyi (strain 35000HP / ATCC 700724), this protein is Asparagine--tRNA ligase.